Reading from the N-terminus, the 248-residue chain is MEELKALILSIQFMTGIPIPINIDVKEDKIYKIASYFPVVGLLIGGILYIAYLLLKDLFSREIVMTFLVAFSYILTRGMHIDGLADTFDGLFSNKDREKIIEIMKDSRLGTNGVLALVFMVILKILFLSDIRQSLLFSALLVSPVIARLSVVFSIAISKSARGGKGLGGLLLERAGLREFVIALLISTIAGYFVMPLKDLALLYVISLSFTCLISKYISKKIGGMTGDTLGAVNEFVELIAFIYFSIL.

The next 8 membrane-spanning stretches (helical) occupy residues 3-23 (ELKA…PINI), 35-55 (SYFP…YLLL), 63-83 (IVMT…HIDG), 109-129 (LGTN…LFLS), 135-155 (LLFS…VFSI), 180-199 (FVIA…PLKD), 200-219 (LALL…KYIS), and 228-248 (DTLG…FSIL).

It belongs to the CobS family. Mg(2+) is required as a cofactor.

Its subcellular location is the cell membrane. It carries out the reaction alpha-ribazole + adenosylcob(III)inamide-GDP = adenosylcob(III)alamin + GMP + H(+). The catalysed reaction is alpha-ribazole 5'-phosphate + adenosylcob(III)inamide-GDP = adenosylcob(III)alamin 5'-phosphate + GMP + H(+). It functions in the pathway cofactor biosynthesis; adenosylcobalamin biosynthesis; adenosylcobalamin from cob(II)yrinate a,c-diamide: step 7/7. Its function is as follows. Joins adenosylcobinamide-GDP and alpha-ribazole to generate adenosylcobalamin (Ado-cobalamin). Also synthesizes adenosylcobalamin 5'-phosphate from adenosylcobinamide-GDP and alpha-ribazole 5'-phosphate. The sequence is that of Adenosylcobinamide-GDP ribazoletransferase from Caldanaerobacter subterraneus subsp. tengcongensis (strain DSM 15242 / JCM 11007 / NBRC 100824 / MB4) (Thermoanaerobacter tengcongensis).